The chain runs to 127 residues: Probable glycine cleavage system H protein (127 aa).

One can recognise a Lipoyl-binding domain in the interval 24-106; that stretch reads TAEVGITAFA…FGDGWMLTVE (83 aa). At Lys-65 the chain carries N6-lipoyllysine.

It belongs to the GcvH family. As to quaternary structure, the glycine cleavage system is composed of four proteins: P, T, L and H. The cofactor is (R)-lipoate.

The glycine cleavage system catalyzes the degradation of glycine. The H protein shuttles the methylamine group of glycine from the P protein to the T protein. The polypeptide is Probable glycine cleavage system H protein (Haloarcula marismortui (strain ATCC 43049 / DSM 3752 / JCM 8966 / VKM B-1809) (Halobacterium marismortui)).